Here is a 343-residue protein sequence, read N- to C-terminus: Glycerol-3-phosphate dehydrogenase [NAD(P)+] (343 aa).

NADPH contacts are provided by Ser-22, Tyr-23, His-43, and Lys-117. Residues Lys-117, Gly-146, and Thr-148 each coordinate sn-glycerol 3-phosphate. Residue Ala-150 participates in NADPH binding. Sn-glycerol 3-phosphate contacts are provided by Lys-202, Asp-255, Ser-265, Arg-266, and Asn-267. Lys-202 functions as the Proton acceptor in the catalytic mechanism. Arg-266 lines the NADPH pocket. Positions 290 and 292 each coordinate NADPH.

Belongs to the NAD-dependent glycerol-3-phosphate dehydrogenase family.

The protein localises to the cytoplasm. The catalysed reaction is sn-glycerol 3-phosphate + NAD(+) = dihydroxyacetone phosphate + NADH + H(+). It carries out the reaction sn-glycerol 3-phosphate + NADP(+) = dihydroxyacetone phosphate + NADPH + H(+). Its pathway is membrane lipid metabolism; glycerophospholipid metabolism. Functionally, catalyzes the reduction of the glycolytic intermediate dihydroxyacetone phosphate (DHAP) to sn-glycerol 3-phosphate (G3P), the key precursor for phospholipid synthesis. In Aliivibrio fischeri (strain ATCC 700601 / ES114) (Vibrio fischeri), this protein is Glycerol-3-phosphate dehydrogenase [NAD(P)+].